The sequence spans 379 residues: 1-deoxy-D-xylulose 5-phosphate reductoisomerase (379 aa).

Residues Thr10, Gly11, Ser12, Ile13, Arg38, Asn39, and Asn121 each contribute to the NADPH site. Lys122 is a 1-deoxy-D-xylulose 5-phosphate binding site. NADPH is bound at residue Glu123. Asp147 serves as a coordination point for Mn(2+). 4 residues coordinate 1-deoxy-D-xylulose 5-phosphate: Ser148, Glu149, Ser173, and His196. Glu149 lines the Mn(2+) pocket. Gly202 lines the NADPH pocket. 1-deoxy-D-xylulose 5-phosphate is bound by residues Ser209, Asn214, Lys215, and Glu218. Glu218 provides a ligand contact to Mn(2+).

It belongs to the DXR family. The cofactor is Mg(2+). It depends on Mn(2+) as a cofactor.

It carries out the reaction 2-C-methyl-D-erythritol 4-phosphate + NADP(+) = 1-deoxy-D-xylulose 5-phosphate + NADPH + H(+). The protein operates within isoprenoid biosynthesis; isopentenyl diphosphate biosynthesis via DXP pathway; isopentenyl diphosphate from 1-deoxy-D-xylulose 5-phosphate: step 1/6. In terms of biological role, catalyzes the NADPH-dependent rearrangement and reduction of 1-deoxy-D-xylulose-5-phosphate (DXP) to 2-C-methyl-D-erythritol 4-phosphate (MEP). This Chlamydia muridarum (strain MoPn / Nigg) protein is 1-deoxy-D-xylulose 5-phosphate reductoisomerase.